A 426-amino-acid chain; its full sequence is D-tagatose-1,6-bisphosphate aldolase subunit KbaZ (426 aa).

Belongs to the GatZ/KbaZ family. KbaZ subfamily. Forms a complex with KbaY.

It participates in carbohydrate metabolism; D-tagatose 6-phosphate degradation; D-glyceraldehyde 3-phosphate and glycerone phosphate from D-tagatose 6-phosphate: step 2/2. Functionally, component of the tagatose-1,6-bisphosphate aldolase KbaYZ that is required for full activity and stability of the Y subunit. Could have a chaperone-like function for the proper and stable folding of KbaY. When expressed alone, KbaZ does not show any aldolase activity. The polypeptide is D-tagatose-1,6-bisphosphate aldolase subunit KbaZ (Escherichia coli O1:K1 / APEC).